Reading from the N-terminus, the 333-residue chain is DNA-directed RNA polymerase subunit alpha (333 aa).

Residues 1–251 (MEKLTKIKHR…AHFQTIGDLT (251 aa)) form an alpha N-terminal domain (alpha-NTD) region. The alpha C-terminal domain (alpha-CTD) stretch occupies residues 272-333 (DMEIRLLNLS…KLNEYGKLKN (62 aa)).

Belongs to the RNA polymerase alpha chain family. In terms of assembly, homodimer. The RNAP catalytic core consists of 2 alpha, 1 beta, 1 beta' and 1 omega subunit. When a sigma factor is associated with the core the holoenzyme is formed, which can initiate transcription.

The enzyme catalyses RNA(n) + a ribonucleoside 5'-triphosphate = RNA(n+1) + diphosphate. In terms of biological role, DNA-dependent RNA polymerase catalyzes the transcription of DNA into RNA using the four ribonucleoside triphosphates as substrates. This is DNA-directed RNA polymerase subunit alpha from Mycoplasmopsis synoviae (strain 53) (Mycoplasma synoviae).